Reading from the N-terminus, the 66-residue chain is Phylloseptin-Az2 (66 aa).

Positions 1-22 are cleaved as a signal peptide; sequence MAFLKKSLFLVLFLGLVSLSIC. Residues 23 to 44 constitute a propeptide that is removed on maturation; it reads EEEKRETEEKENEQEDDDKSEE. The segment at 24-45 is disordered; the sequence is EEKRETEEKENEQEDDDKSEEK. Acidic residues predominate over residues 31-41; it reads EKENEQEDDDK. At Phe65 the chain carries Phenylalanine amide.

In terms of tissue distribution, expressed by the skin glands.

The protein localises to the secreted. Functionally, has antibacterial activity against the Gram-negative bacteria E.coli ATCC 11775 (MIC=7.2 uM), and the Gram-positive bacteria S.aureus ATCC 12600 (MIC=3.6 uM) and M.luteus ATCC 49732 (MIC=1.8 uM). Does not inhibit the growth of the fungus C.albicans. This is Phylloseptin-Az2 from Pithecopus azureus (Orange-legged monkey tree frog).